Reading from the N-terminus, the 244-residue chain is Small ribosomal subunit protein uS2 (244 aa).

This sequence belongs to the universal ribosomal protein uS2 family.

This is Small ribosomal subunit protein uS2 from Hydrogenovibrio crunogenus (strain DSM 25203 / XCL-2) (Thiomicrospira crunogena).